A 405-amino-acid chain; its full sequence is MSLPKPNSFRAGPDERGHFGTFGGRFVAETLMPLILDLEKAYAAAKADPSFQKEMNGYLKDYVGRPSPLYFAERLTEHLGGAKIYLKREELNHTGSHKVNNVLGQIMVARRMGKKRIIAETGAGQHGVATATLCARFGLECIVYMGAVDVARQEPNVIRMEMLGAKVVPVQSGTRTLKDAMNDALRDWVTNVATTFYCIGTVAGPHPYPAMVRDFQSVIGHETREQMMAAEGRLPDSLVACIGGGSNAMGLFHPFLDEPAVEIFGVEAAGHGLTNLHAASLAGGRPGVLHGNRTYLLMNEDGQIQDAHSISAGLDYPGIGPEHAWLHETGRVTYLSATDEEALAAFQLLSRLEGIIPALESAHAIAKLSQLAPKRPRDHLMVVNLSGRGDKDVPQVGDILRGRKS.

Lys-98 is subject to N6-(pyridoxal phosphate)lysine.

This sequence belongs to the TrpB family. As to quaternary structure, tetramer of two alpha and two beta chains. Requires pyridoxal 5'-phosphate as cofactor.

It carries out the reaction (1S,2R)-1-C-(indol-3-yl)glycerol 3-phosphate + L-serine = D-glyceraldehyde 3-phosphate + L-tryptophan + H2O. It functions in the pathway amino-acid biosynthesis; L-tryptophan biosynthesis; L-tryptophan from chorismate: step 5/5. In terms of biological role, the beta subunit is responsible for the synthesis of L-tryptophan from indole and L-serine. The chain is Tryptophan synthase beta chain from Afipia carboxidovorans (strain ATCC 49405 / DSM 1227 / KCTC 32145 / OM5) (Oligotropha carboxidovorans).